Consider the following 230-residue polypeptide: RING finger protein 141 (230 aa).

Gly-2 carries N-myristoyl glycine lipidation. An RING-type zinc finger spans residues 155 to 192 (CCICMDGRADLILPCAHSFCQKCIDKWSDRHRNCPICR).

Its subcellular location is the membrane. Its function is as follows. May be involved in spermatogenesis. This chain is RING finger protein 141 (RNF141), found in Pongo abelii (Sumatran orangutan).